A 459-amino-acid polypeptide reads, in one-letter code: tRNA modification GTPase MnmE (459 aa).

The (6S)-5-formyl-5,6,7,8-tetrahydrofolate site is built by R30, E93, and K132. The 156-residue stretch at 226–381 (GVTMAIVGKP…LEEKILESVK (156 aa)) folds into the TrmE-type G domain. N236 contacts K(+). Residues 236 to 241 (NVGKST), 255 to 261 (TDIPGTT), and 280 to 283 (DTAG) each bind GTP. Mg(2+) is bound at residue S240. Residues T255, I257, and T260 each contribute to the K(+) site. Residue T261 participates in Mg(2+) binding. K459 is a binding site for (6S)-5-formyl-5,6,7,8-tetrahydrofolate.

The protein belongs to the TRAFAC class TrmE-Era-EngA-EngB-Septin-like GTPase superfamily. TrmE GTPase family. In terms of assembly, homodimer. Heterotetramer of two MnmE and two MnmG subunits. The cofactor is K(+).

It localises to the cytoplasm. Exhibits a very high intrinsic GTPase hydrolysis rate. Involved in the addition of a carboxymethylaminomethyl (cmnm) group at the wobble position (U34) of certain tRNAs, forming tRNA-cmnm(5)s(2)U34. The polypeptide is tRNA modification GTPase MnmE (Fervidobacterium nodosum (strain ATCC 35602 / DSM 5306 / Rt17-B1)).